A 122-amino-acid chain; its full sequence is Large ribosomal subunit protein uL14c (122 aa).

Belongs to the universal ribosomal protein uL14 family. In terms of assembly, part of the 50S ribosomal subunit.

Its subcellular location is the plastid. It localises to the chloroplast. Functionally, binds to 23S rRNA. This is Large ribosomal subunit protein uL14c from Jasminum nudiflorum (Winter jasmine).